A 346-amino-acid polypeptide reads, in one-letter code: MVSEAPPFWWTKADWRAYALWPFSWLYGRIAGMRMDRARRATSAVPLICIGNFTVGGAGKTPTAIAIARAAKARGLKPAFLSRGYGGSLDVTTLVDPEHHRARDVGDEPLLLAREALTVICRRRVDGARKLAAEGADIIIMDDGFQSARLVFDFALIVVDSGRGIGNGHLVPSGPVRAPIGNQLRHATALLKLGHGSAADPVVRRASRAGKPVYVAETVRIDEGSLVGVKVLAWAGIADTEKFFKTVRETGAIIEETRSFPDHHHFSEDEIADLIDRATSRGYTLVTTAKDIVRLEPGHGRAGELAAKSRVIEIEVRFDDPAAPGKIIDAALASARARRLREHKSG.

Residue 54-61 participates in ATP binding; the sequence is TVGGAGKT.

This sequence belongs to the LpxK family.

The catalysed reaction is a lipid A disaccharide + ATP = a lipid IVA + ADP + H(+). The protein operates within glycolipid biosynthesis; lipid IV(A) biosynthesis; lipid IV(A) from (3R)-3-hydroxytetradecanoyl-[acyl-carrier-protein] and UDP-N-acetyl-alpha-D-glucosamine: step 6/6. Transfers the gamma-phosphate of ATP to the 4'-position of a tetraacyldisaccharide 1-phosphate intermediate (termed DS-1-P) to form tetraacyldisaccharide 1,4'-bis-phosphate (lipid IVA). This is Tetraacyldisaccharide 4'-kinase from Sinorhizobium medicae (strain WSM419) (Ensifer medicae).